Here is a 1445-residue protein sequence, read N- to C-terminus: 3'-5' RNA helicase YTHDC2 (1445 aa).

Positions 1 to 50 are disordered; it reads MSRPSSVSPRPPAPSGGGTGGGGGGSGGGGGGGGGGPASCGPGGGGRAKG. The segment covering 15–48 has biased composition (gly residues); sequence SGGGTGGGGGGSGGGGGGGGGGPASCGPGGGGRA. Residues 53 to 121 enclose the R3H domain; sequence DIRIDEEVKI…NRYLTVKKKD (69 aa). Residues 218–384 enclose the Helicase ATP-binding domain; sequence VKIIKENKVV…FGSCPVIYIQ (167 aa). 231–238 contributes to the ATP binding site; that stretch reads GETGSGKT. The DEAH box motif lies at 331 to 334; sequence DEVH. ANK repeat units follow at residues 521–553 and 554–586; these read TSATALMVAAGRGFTSQVEQLISMGANVHSKAS and NGWMALDWAKHFGQTEIVDLLESYSASLEFGNL. The Helicase C-terminal domain occupies 627–799; sequence LLYNICHSCD…ELCLHTKLLA (173 aa). Phosphoserine occurs at positions 1104, 1105, and 1107. Residues 1179-1189 show a composition bias toward polar residues; that stretch reads EQSAGLQQPSG. Positions 1179–1303 are disordered; sequence EQSAGLQQPS…SPSPRPNMPI (125 aa). Residues 1246-1264 are compositionally biased toward basic and acidic residues; sequence KYKDRGILHPKRSTDDRSD. Low complexity predominate over residues 1265–1279; sequence QSSVKSTDSSSYPSP. Residues Ser-1278, Ser-1282, and Ser-1296 each carry the phosphoserine modification. One can recognise a YTH domain in the interval 1303–1433; it reads IRYFIMKSSN…QVGEQLLQLW (131 aa). Residues 1309–1311, Trp-1325, and Trp-1375 contribute to the RNA site; that span reads KSS.

This sequence belongs to the DEAD box helicase family. DEAH subfamily. As to quaternary structure, interacts with MEIOC; binds transcripts that regulate the mitotic cell cycle inhibiting progression into metaphase, thereby allowing meiotic prophase to proceed normally. Interacts (via ANK repeats) with XRN1. Interacts with ZCCHC4. Associates with the small ribosomal subunit. Interacts with RBM46. In terms of tissue distribution, present in male and female germ cells (at protein level). Highly expressed in testis. Not detected in spermatogonia next to the tubule wall but is strongly expressed in spermatocytes, suggesting that it is up-regulated in germ cells upon entry into meiosis (at protein level).

It localises to the cytoplasm. The protein resides in the perinuclear region. It carries out the reaction ATP + H2O = ADP + phosphate + H(+). In terms of biological role, 3'-5' RNA helicase that plays a key role in the male and female germline by promoting transition from mitotic to meiotic divisions in stem cells. Specifically recognizes and binds N6-methyladenosine (m6A)-containing RNAs, a modification present at internal sites of mRNAs and some non-coding RNAs that plays a role in the efficiency of RNA processing and stability. Essential for ensuring a successful progression of the meiotic program in the germline by regulating the level of m6A-containing RNAs. Acts by binding and promoting degradation of m6A-containing mRNAs: the 3'-5' RNA helicase activity is required for this process and RNA degradation may be mediated by XRN1 exoribonuclease. Required for both spermatogenesis and oogenesis. The sequence is that of 3'-5' RNA helicase YTHDC2 from Mus musculus (Mouse).